We begin with the raw amino-acid sequence, 230 residues long: 5'-methylthioadenosine/S-adenosylhomocysteine nucleosidase (230 aa).

Glu12 (proton acceptor) is an active-site residue. Residues Gly78, Met153, and 174–175 (ME) contribute to the substrate site. Asp198 serves as the catalytic Proton donor.

This sequence belongs to the PNP/UDP phosphorylase family. MtnN subfamily.

The catalysed reaction is S-adenosyl-L-homocysteine + H2O = S-(5-deoxy-D-ribos-5-yl)-L-homocysteine + adenine. It carries out the reaction S-methyl-5'-thioadenosine + H2O = 5-(methylsulfanyl)-D-ribose + adenine. It catalyses the reaction 5'-deoxyadenosine + H2O = 5-deoxy-D-ribose + adenine. It participates in amino-acid biosynthesis; L-methionine biosynthesis via salvage pathway; S-methyl-5-thio-alpha-D-ribose 1-phosphate from S-methyl-5'-thioadenosine (hydrolase route): step 1/2. Catalyzes the irreversible cleavage of the glycosidic bond in both 5'-methylthioadenosine (MTA) and S-adenosylhomocysteine (SAH/AdoHcy) to adenine and the corresponding thioribose, 5'-methylthioribose and S-ribosylhomocysteine, respectively. Also cleaves 5'-deoxyadenosine, a toxic by-product of radical S-adenosylmethionine (SAM) enzymes, into 5-deoxyribose and adenine. The protein is 5'-methylthioadenosine/S-adenosylhomocysteine nucleosidase of Lysinibacillus sphaericus (strain C3-41).